The primary structure comprises 858 residues: MAFPAPAFSLANLLNGSYGVDTPEEVERVRSEQRDEAAAACRNYRPLPAVDVSESVPEDAHSLRTPDGAPSEEVSVEFVTYGAEDYLEKSDDELLVAFETMVKPMRIGQLWCPAFNKCSFISSIAMARALLLAPRTSHRTMKCFEDLVAAIYTKSDFYYDDECEADDVQIDISSRDVPGYSFEPWSRTSGFEPPPICEACDMIMYQCPCFDFNALKKSCAERTFADDYVIEGLDGVVNNATLSSNLGPFLVPVKCPYEKCPTPVGEIPPDLNRATDRVDINLVQSICDSTLPTHSNYDDSFHQVFVESADYSIDLDHVRLRQSDLIAKIPDSGHMIPVLNTGSGHKRVGTTKEVLTAIKKRNADVPELGDSVNLSRLSKAVAERFFISYINGNSLASSNFVNVVSNFHDYMEKWKSSGLSYDDLPDLHAENLQFYDHMIKSDVKPVVSDTLNIDRPVPATITYHKKGITSQFSPLFTALFERFQRCLRERIILPVGKISSLEMAGFDVKNKHCFEIDLSKFDKSQGEFPFKIQEHILNGLGCPAPITKWWCDFHRFSYIRDRRAGVGMPISFQRRTGDAFTYFGNTIVTMAEFAWCYDTDQFEKLLFSGDDSLGFSVLPPVGDPSKFTTLFNMEAKVMEPAVPYICSKFLLSDEFGNTFSVPDPLREVQRLGTKKIPCSDNDEFLFAHFMSFVDRLKFLDRMTQSCIDQLSLFFELKYRKSGEEAALMLGAFKKYTANFQSYKELYYSDRRQCELINSFSCVELRIERSSSTKQREKKDGIERRRNDKRRTPTGSYGGGEEAETKVSQAESTGTRSQKSQREGAFKSQAVPLPTILSSRWFGTDRDVPPCEHGGIVRV.

The 114-residue stretch at 511–624 (KHCFEIDLSK…FSVLPPVGDP (114 aa)) folds into the RdRp catalytic domain. Residues 772 to 785 (TKQREKKDGIERRR) show a composition bias toward basic and acidic residues. A disordered region spans residues 772 to 830 (TKQREKKDGIERRRNDKRRTPTGSYGGGEEAETKVSQAESTGTRSQKSQREGAFKSQAV). The span at 805–817 (KVSQAESTGTRSQ) shows a compositional bias: polar residues.

Belongs to the ssRNA positive-strand viruses RNA-directed RNA polymerase family. Interacts with replication protein 1a.

It carries out the reaction RNA(n) + a ribonucleoside 5'-triphosphate = RNA(n+1) + diphosphate. RNA-dependent RNA polymerase which replicates the viral genome composed of 3 RNA segments, RNA1, RNA2 and RNA3. In Cucumber mosaic virus (strain As) (CMV), this protein is RNA-directed RNA polymerase 2a.